The sequence spans 509 residues: SH2 domain-containing adapter protein B (509 aa).

Disordered stretches follow at residues 1-103 (MAKW…GSSL) and 144-178 (SGAG…EVRY). Residues 1-410 (MAKWLNKYFS…PAVPLEKQIW (410 aa)) are mediates interaction with LAT, PTK2/FAK1, JAK1 and JAK3. The segment covering 44–61 (VPQASSAASASCGPATAS) has biased composition (low complexity). Residues 62–79 (CFSASSGSLPDDSGSTSD) show a composition bias toward polar residues. Position 102 is a phosphoserine (Ser102). Residues 144-158 (SGAGAAASSSSSSGS) are compositionally biased toward low complexity. Lys187 is covalently cross-linked (Glycyl lysine isopeptide (Lys-Gly) (interchain with G-Cter in SUMO2)). The disordered stretch occupies residues 229 to 385 (AEESGAGKKD…APGGGFKPIK (157 aa)). Basic and acidic residues-rich tracts occupy residues 233-242 (GAGKKDKVTI) and 250-262 (FDAK…KAGK). A phosphoserine mark is found at Ser307 and Ser317. The span at 307-317 (SVDSDSESTVS) shows a compositional bias: polar residues. A compositionally biased stretch (basic and acidic residues) spans 319-334 (RLRESKLPQDDDRPAD). The residue at position 388 (Ser388) is a Phosphoserine. Residues 410-504 (WYHGAISRGD…AEHLSLLYPV (95 aa)) enclose the SH2 domain.

As to quaternary structure, interacts with PTPN11. Interacts with phosphorylated 'Tyr-720' of the ligand-activated receptor PDGFRA via its SH2 domain. Interacts with the ligand-activated receptors PDGFRB, FGFR1, KDR/VEGFR2, IL2RB and IL2RG. Interacts with EPS8 and V-SRC. Interacts with GRB2 and GRAP. Interacts with CD3Z. Interacts with tyrosine-phosphorylated LAT upon T-cell antigen receptor activation. Interacts with PLCG1. Interacts with ZAP70, LCP2/SLP-76, VAV1 and GRAP2. Interacts with JAK1 and JAK3. Interacts with PTK2/FAK1. Interacts with CRK/CrKII. Interacts with IRS2. Phosphorylated upon PDGFRA, PDGFRB, TCR, IL2 receptor, FGFR1 or VEGFR2 activation. In terms of tissue distribution, widely expressed.

The protein localises to the cytoplasm. Its subcellular location is the cell membrane. Adapter protein which regulates several signal transduction cascades by linking activated receptors to downstream signaling components. May play a role in angiogenesis by regulating FGFR1, VEGFR2 and PDGFR signaling. May also play a role in T-cell antigen receptor/TCR signaling, interleukin-2 signaling, apoptosis and neuronal cells differentiation by mediating basic-FGF and NGF-induced signaling cascades. May also regulate IRS1 and IRS2 signaling in insulin-producing cells. The polypeptide is SH2 domain-containing adapter protein B (SHB) (Homo sapiens (Human)).